Reading from the N-terminus, the 370-residue chain is tRNA pseudouridine synthase D (370 aa).

The active-site Nucleophile is the D77. Residues 152–297 (GVPNYFGEQR…LEQERRPLLL (146 aa)) enclose the TRUD domain.

It belongs to the pseudouridine synthase TruD family.

The catalysed reaction is uridine(13) in tRNA = pseudouridine(13) in tRNA. Responsible for synthesis of pseudouridine from uracil-13 in transfer RNAs. This is tRNA pseudouridine synthase D from Shewanella oneidensis (strain ATCC 700550 / JCM 31522 / CIP 106686 / LMG 19005 / NCIMB 14063 / MR-1).